Reading from the N-terminus, the 749-residue chain is Catalase-peroxidase 2 (749 aa).

Residues 1–27 (MFKRTIPLFAAFTLAISPSIFPNYAHA) form the signal peptide. Residues 107–229 (WHAAGTYRIY…LAATVMGLIY (123 aa)) constitute a cross-link (tryptophyl-tyrosyl-methioninium (Trp-Tyr) (with M-255)). His-108 functions as the Proton acceptor in the catalytic mechanism. A cross-link (tryptophyl-tyrosyl-methioninium (Tyr-Met) (with W-107)) is located at residues 229-255 (YVNPEGPNGVPDPLAAAEKIRETFGRM). Heme b is bound at residue His-270.

Belongs to the peroxidase family. Peroxidase/catalase subfamily. Homodimer or homotetramer. Heme b is required as a cofactor. Formation of the three residue Trp-Tyr-Met cross-link is important for the catalase, but not the peroxidase activity of the enzyme.

The enzyme catalyses H2O2 + AH2 = A + 2 H2O. The catalysed reaction is 2 H2O2 = O2 + 2 H2O. Its function is as follows. Bifunctional enzyme with both catalase and broad-spectrum peroxidase activity. In Legionella pneumophila (strain Lens), this protein is Catalase-peroxidase 2.